A 54-amino-acid chain; its full sequence is Large ribosomal subunit protein bL32 (54 aa).

Residues 1–24 form a disordered region; that stretch reads MAVQKSKPTRSKRGMRRSHDSLKE. Residues 7–16 are compositionally biased toward basic residues; the sequence is KPTRSKRGMR.

This sequence belongs to the bacterial ribosomal protein bL32 family.

This is Large ribosomal subunit protein bL32 from Buchnera aphidicola subsp. Schizaphis graminum (strain Sg).